A 388-amino-acid chain; its full sequence is Basigin (388 aa).

The N-terminal stretch at 1-21 (MAAGADVPCAVLALLVLGSLA) is a signal peptide. Residues 27-323 (TAGFIKSPLS…SGSATVNLRV (297 aa)) lie on the Extracellular side of the membrane. In terms of domain architecture, Ig-like spans 43 to 131 (DSVELHCEAV…NHLSKSPKVK (89 aa)). 2 cysteine pairs are disulfide-bonded: C49/C113 and C162/C211. Residues 143–218 (ERPVITGQYS…YECIYNTNPV (76 aa)) form the Ig-like C2-type domain. Residues N163, N222, N280, N286, and N307 are each glycosylated (N-linked (GlcNAc...) asparagine). The region spanning 229-323 (PQVVAYKKSE…SGSATVNLRV (95 aa)) is the Ig-like V-type domain. An intrachain disulfide couples C250 to C306. The helical transmembrane segment at 324 to 344 (RSRLAALWPFLGIVAEVLVLV) threads the bilayer. Residues 345 to 388 (TIIFIYEKRRKPDEVLDDDDGGSAPLKSNATNHKDKNVRQRNAN) are Cytoplasmic-facing. The segment at 358-388 (EVLDDDDGGSAPLKSNATNHKDKNVRQRNAN) is disordered.

Interacts with NXNL1, SLC2A1 and SLC16A1. Post-translationally, N-glycosylated. Retinal cone photoreceptors (at protein level). In terms of tissue distribution, brain endothelial cells, kidney epithelial cells and erythroblasts (at protein level).

The protein resides in the cell membrane. The protein localises to the photoreceptor inner segment. It is found in the cell projection. Its subcellular location is the cilium. It localises to the photoreceptor outer segment. The protein resides in the endoplasmic reticulum membrane. The protein localises to the basolateral cell membrane. Essential for normal retinal maturation and development. Acts as a retinal cell surface receptor for NXNL1 and plays an important role in NXNL1-mediated survival of retinal cone photoreceptors. In association with glucose transporter SLC16A1/GLUT1 and NXNL1, promotes retinal cone survival by enhancing aerobic glycolysis and accelerating the entry of glucose into photoreceptors. Its function is as follows. Signaling receptor for cyclophilins, essential for PPIA/CYPA and PPIB/CYPB-dependent signaling related to chemotaxis and adhesion of immune cells. Plays an important role in targeting the monocarboxylate transporters SLC16A1/GLUT1, SLC16A3, SLC16A8, SLC16A11 and SLC16A12 to the plasma membrane. Acts as a coreceptor for vascular endothelial growth factor receptor 2 (KDR/VEGFR2) in endothelial cells enhancing its VEGFA-mediated activation and downstream signaling. Promotes angiogenesis through EPAS1/HIF2A-mediated up-regulation of VEGFA and KDR/VEGFR2 in endothelial cells. This Gallus gallus (Chicken) protein is Basigin (BSG).